Consider the following 283-residue polypeptide: MSAHIIDGNLLSQQLRQDVATRAAALSAKGKQPGLAVILVGADPASQVYVRNKVKACEDNGLFSLLEKYEADMTEAALLARIAALNNDPAIHGILVQMPLPKHIDPTKVIEAISPRKDVDGYSVLSAGELLTGLPGFRPCTPYGCMKLIESTGTKIAGKHAVVIGRSNTVGKPMALLLLQANATVTICHSGTADLGYHTRQADIVVAATGRRNTLTADMIKPGAIVIDVGINRDDNGKLCGDVDFAAAKEVAGHISPVPGGVGPMTITMLLVNTIEAAERETN.

NADP(+) is bound by residues 165–167, Ser190, and Ile231; that span reads GRS.

It belongs to the tetrahydrofolate dehydrogenase/cyclohydrolase family. Homodimer.

It catalyses the reaction (6R)-5,10-methylene-5,6,7,8-tetrahydrofolate + NADP(+) = (6R)-5,10-methenyltetrahydrofolate + NADPH. The catalysed reaction is (6R)-5,10-methenyltetrahydrofolate + H2O = (6R)-10-formyltetrahydrofolate + H(+). The protein operates within one-carbon metabolism; tetrahydrofolate interconversion. Catalyzes the oxidation of 5,10-methylenetetrahydrofolate to 5,10-methenyltetrahydrofolate and then the hydrolysis of 5,10-methenyltetrahydrofolate to 10-formyltetrahydrofolate. The chain is Bifunctional protein FolD from Herminiimonas arsenicoxydans.